Reading from the N-terminus, the 478-residue chain is Protein nucleotidyltransferase YdiU (478 aa).

Positions 84, 86, 87, 107, 119, 120, 170, and 177 each coordinate ATP. Catalysis depends on D246, which acts as the Proton acceptor. 2 residues coordinate Mg(2+): N247 and D256. Position 256 (D256) interacts with ATP.

It belongs to the SELO family. It depends on Mg(2+) as a cofactor. Mn(2+) is required as a cofactor.

It carries out the reaction L-seryl-[protein] + ATP = 3-O-(5'-adenylyl)-L-seryl-[protein] + diphosphate. It catalyses the reaction L-threonyl-[protein] + ATP = 3-O-(5'-adenylyl)-L-threonyl-[protein] + diphosphate. The enzyme catalyses L-tyrosyl-[protein] + ATP = O-(5'-adenylyl)-L-tyrosyl-[protein] + diphosphate. The catalysed reaction is L-histidyl-[protein] + UTP = N(tele)-(5'-uridylyl)-L-histidyl-[protein] + diphosphate. It carries out the reaction L-seryl-[protein] + UTP = O-(5'-uridylyl)-L-seryl-[protein] + diphosphate. It catalyses the reaction L-tyrosyl-[protein] + UTP = O-(5'-uridylyl)-L-tyrosyl-[protein] + diphosphate. Functionally, nucleotidyltransferase involved in the post-translational modification of proteins. It can catalyze the addition of adenosine monophosphate (AMP) or uridine monophosphate (UMP) to a protein, resulting in modifications known as AMPylation and UMPylation. The protein is Protein nucleotidyltransferase YdiU of Escherichia coli O6:K15:H31 (strain 536 / UPEC).